Here is a 240-residue protein sequence, read N- to C-terminus: Phosphatidylserine decarboxylase proenzyme (240 aa).

The Schiff-base intermediate with substrate; via pyruvic acid role is filled by S209. The residue at position 209 (S209) is a Pyruvic acid (Ser); by autocatalysis.

It belongs to the phosphatidylserine decarboxylase family. PSD-A subfamily. As to quaternary structure, heterodimer of a large membrane-associated beta subunit and a small pyruvoyl-containing alpha subunit. Pyruvate is required as a cofactor. In terms of processing, is synthesized initially as an inactive proenzyme. Formation of the active enzyme involves a self-maturation process in which the active site pyruvoyl group is generated from an internal serine residue via an autocatalytic post-translational modification. Two non-identical subunits are generated from the proenzyme in this reaction, and the pyruvate is formed at the N-terminus of the alpha chain, which is derived from the carboxyl end of the proenzyme. The post-translation cleavage follows an unusual pathway, termed non-hydrolytic serinolysis, in which the side chain hydroxyl group of the serine supplies its oxygen atom to form the C-terminus of the beta chain, while the remainder of the serine residue undergoes an oxidative deamination to produce ammonia and the pyruvoyl prosthetic group on the alpha chain.

The protein resides in the cell membrane. It catalyses the reaction a 1,2-diacyl-sn-glycero-3-phospho-L-serine + H(+) = a 1,2-diacyl-sn-glycero-3-phosphoethanolamine + CO2. It functions in the pathway phospholipid metabolism; phosphatidylethanolamine biosynthesis; phosphatidylethanolamine from CDP-diacylglycerol: step 2/2. Catalyzes the formation of phosphatidylethanolamine (PtdEtn) from phosphatidylserine (PtdSer). This is Phosphatidylserine decarboxylase proenzyme from Mycobacterium ulcerans (strain Agy99).